The following is a 303-amino-acid chain: Succinate--CoA ligase [ADP-forming] subunit alpha (303 aa).

Residues 20 to 23 (TGSE), lysine 46, and 108 to 110 (ITE) contribute to the CoA site. Substrate is bound at residue tyrosine 173. The active-site Tele-phosphohistidine intermediate is the histidine 259.

It belongs to the succinate/malate CoA ligase alpha subunit family. In terms of assembly, heterotetramer of two alpha and two beta subunits.

The catalysed reaction is succinate + ATP + CoA = succinyl-CoA + ADP + phosphate. It carries out the reaction GTP + succinate + CoA = succinyl-CoA + GDP + phosphate. It participates in carbohydrate metabolism; tricarboxylic acid cycle; succinate from succinyl-CoA (ligase route): step 1/1. Functionally, succinyl-CoA synthetase functions in the citric acid cycle (TCA), coupling the hydrolysis of succinyl-CoA to the synthesis of either ATP or GTP and thus represents the only step of substrate-level phosphorylation in the TCA. The alpha subunit of the enzyme binds the substrates coenzyme A and phosphate, while succinate binding and nucleotide specificity is provided by the beta subunit. The sequence is that of Succinate--CoA ligase [ADP-forming] subunit alpha from Mycobacterium bovis (strain ATCC BAA-935 / AF2122/97).